Consider the following 156-residue polypeptide: Small ribosomal subunit protein uS7 (156 aa).

The protein belongs to the universal ribosomal protein uS7 family. Part of the 30S ribosomal subunit. Contacts proteins S9 and S11.

One of the primary rRNA binding proteins, it binds directly to 16S rRNA where it nucleates assembly of the head domain of the 30S subunit. Is located at the subunit interface close to the decoding center, probably blocks exit of the E-site tRNA. The chain is Small ribosomal subunit protein uS7 from Macrococcus caseolyticus (strain JCSC5402) (Macrococcoides caseolyticum).